A 692-amino-acid chain; its full sequence is Glycine--tRNA ligase beta subunit (692 aa).

It belongs to the class-II aminoacyl-tRNA synthetase family. As to quaternary structure, tetramer of two alpha and two beta subunits.

The protein resides in the cytoplasm. It carries out the reaction tRNA(Gly) + glycine + ATP = glycyl-tRNA(Gly) + AMP + diphosphate. This is Glycine--tRNA ligase beta subunit from Hahella chejuensis (strain KCTC 2396).